Reading from the N-terminus, the 615-residue chain is Leucine aminopeptidase 2-1 (615 aa).

Substrate-binding positions include 137-139 (QCQ) and 261-266 (PYGGME). H290 contributes to the Zn(2+) binding site. The Proton acceptor role is filled by E291. Residues H294 and E313 each contribute to the Zn(2+) site. Catalysis depends on Y380, which acts as the Proton donor.

Belongs to the peptidase M1 family. Requires Zn(2+) as cofactor.

It is found in the cytoplasm. The protein resides in the nucleus. The catalysed reaction is an epoxide + H2O = an ethanediol. Its function is as follows. Aminopeptidase that preferentially cleaves di- and tripeptides. Also has low epoxide hydrolase activity (in vitro). Can hydrolyze the epoxide leukotriene LTA(4) but it forms preferentially 5,6-dihydroxy-7,9,11,14-eicosatetraenoic acid rather than the cytokine leukotriene B(4) as the product compared to the homologous mammalian enzyme (in vitro). The polypeptide is Leucine aminopeptidase 2-1 (Meyerozyma guilliermondii (strain ATCC 6260 / CBS 566 / DSM 6381 / JCM 1539 / NBRC 10279 / NRRL Y-324) (Yeast)).